A 453-amino-acid polypeptide reads, in one-letter code: Tol-Pal system protein TolB (453 aa).

The signal sequence occupies residues 1 to 34; the sequence is MYLIIKKTHKLPHWLQKVSLSIMLIIFLWKPALL.

Belongs to the TolB family. In terms of assembly, the Tol-Pal system is composed of five core proteins: the inner membrane proteins TolA, TolQ and TolR, the periplasmic protein TolB and the outer membrane protein Pal. They form a network linking the inner and outer membranes and the peptidoglycan layer.

The protein resides in the periplasm. Its function is as follows. Part of the Tol-Pal system, which plays a role in outer membrane invagination during cell division and is important for maintaining outer membrane integrity. TolB occupies a key intermediary position in the Tol-Pal system because it communicates directly with both membrane-embedded components, Pal in the outer membrane and TolA in the inner membrane. In Blochmanniella pennsylvanica (strain BPEN), this protein is Tol-Pal system protein TolB.